We begin with the raw amino-acid sequence, 334 residues long: Ornithine carbamoyltransferase (334 aa).

Carbamoyl phosphate-binding positions include 56–59, Q83, R107, and 134–137; these read STRT and HPTQ. Residues N168, D232, and 236–237 contribute to the L-ornithine site; that span reads SM. Residues 274 to 275 and R320 each bind carbamoyl phosphate; that span reads CL.

The protein belongs to the aspartate/ornithine carbamoyltransferase superfamily. OTCase family.

It localises to the cytoplasm. The catalysed reaction is carbamoyl phosphate + L-ornithine = L-citrulline + phosphate + H(+). Its pathway is amino-acid biosynthesis; L-arginine biosynthesis; L-arginine from L-ornithine and carbamoyl phosphate: step 1/3. Its function is as follows. Reversibly catalyzes the transfer of the carbamoyl group from carbamoyl phosphate (CP) to the N(epsilon) atom of ornithine (ORN) to produce L-citrulline. The chain is Ornithine carbamoyltransferase from Shigella boydii serotype 4 (strain Sb227).